A 763-amino-acid chain; its full sequence is Disintegrin and metalloproteinase domain-containing protein 29 (763 aa).

The N-terminal stretch at 1 to 31 is a signal peptide; it reads MNMIEALLSMRVLFLTQVFGIFLCFPGLTKA. Positions 32–200 are excised as a propeptide; sequence GHLHYHSSIE…ILKQSSFEDW (169 aa). N-linked (GlcNAc...) asparagine glycans are attached at residues Asn-164, Asn-177, and Asn-223. The Extracellular segment spans residues 201–684; it reads WTHTKIVELV…KTNKKKHFFY (484 aa). The Peptidase M12B domain maps to 205–396; it reads KIVELVVVVD…NTRCLMENMY (192 aa). Intrachain disulfides connect Cys-313/Cys-390, Cys-353/Cys-375, and Cys-355/Cys-360. N-linked (GlcNAc...) asparagine glycosylation is found at Asn-374, Asn-424, Asn-434, Asn-475, and Asn-584. A Disintegrin domain is found at 403–489; it reads RTRCGNGVVE…ECPDDAYVED (87 aa). A disulfide bridge connects residues Cys-461 and Cys-481. Intrachain disulfides connect Cys-631/Cys-642, Cys-636/Cys-648, and Cys-650/Cys-659. One can recognise an EGF-like domain in the interval 631-660; it reads CTPAFCNYRGICNNKHHCHCNFHWDPPNCM. A helical transmembrane segment spans residues 685-705; the sequence is LLLLQLIILACLLSCLLWLLF. Residues 706–763 are Cytoplasmic-facing; the sequence is NIKGSKRKPQVQPTPVKTKKVSKKVPSQKPSPVPSPSLPQLRMPSRSASPTSSIKSTN. The tract at residues 712–763 is disordered; sequence RKPQVQPTPVKTKKVSKKVPSQKPSPVPSPSLPQLRMPSRSASPTSSIKSTN. Polar residues predominate over residues 751–763; sequence RSASPTSSIKSTN.

The protein resides in the membrane. May be involved in spermatogenesis and fertilization. Seems to be a non catalytic metalloprotease-like protein. This Mus musculus (Mouse) protein is Disintegrin and metalloproteinase domain-containing protein 29 (Adam29).